The primary structure comprises 228 residues: Large ribosomal subunit protein uL3 (228 aa).

Gln151 is modified (N5-methylglutamine).

This sequence belongs to the universal ribosomal protein uL3 family. As to quaternary structure, part of the 50S ribosomal subunit. Forms a cluster with proteins L14 and L19. Post-translationally, methylated by PrmB.

In terms of biological role, one of the primary rRNA binding proteins, it binds directly near the 3'-end of the 23S rRNA, where it nucleates assembly of the 50S subunit. This is Large ribosomal subunit protein uL3 from Rhizobium meliloti (strain 1021) (Ensifer meliloti).